The primary structure comprises 176 residues: Ribosome maturation factor RimM (176 aa).

One can recognise a PRC barrel domain in the interval 97 to 176 (EDEFYWRDLI…QILVDWDPDF (80 aa)).

It belongs to the RimM family. In terms of assembly, binds ribosomal protein uS19.

It is found in the cytoplasm. Its function is as follows. An accessory protein needed during the final step in the assembly of 30S ribosomal subunit, possibly for assembly of the head region. Essential for efficient processing of 16S rRNA. May be needed both before and after RbfA during the maturation of 16S rRNA. It has affinity for free ribosomal 30S subunits but not for 70S ribosomes. This is Ribosome maturation factor RimM from Shewanella sp. (strain ANA-3).